A 486-amino-acid chain; its full sequence is Protein nucleotidyltransferase YdiU (486 aa).

Residues glycine 90, glycine 92, arginine 93, lysine 113, aspartate 125, glycine 126, arginine 176, and arginine 183 each coordinate ATP. Residue aspartate 252 is the Proton acceptor of the active site. 2 residues coordinate Mg(2+): asparagine 253 and aspartate 262. Aspartate 262 is a binding site for ATP.

Belongs to the SELO family. It depends on Mg(2+) as a cofactor. The cofactor is Mn(2+).

The catalysed reaction is L-seryl-[protein] + ATP = 3-O-(5'-adenylyl)-L-seryl-[protein] + diphosphate. It carries out the reaction L-threonyl-[protein] + ATP = 3-O-(5'-adenylyl)-L-threonyl-[protein] + diphosphate. It catalyses the reaction L-tyrosyl-[protein] + ATP = O-(5'-adenylyl)-L-tyrosyl-[protein] + diphosphate. The enzyme catalyses L-histidyl-[protein] + UTP = N(tele)-(5'-uridylyl)-L-histidyl-[protein] + diphosphate. The catalysed reaction is L-seryl-[protein] + UTP = O-(5'-uridylyl)-L-seryl-[protein] + diphosphate. It carries out the reaction L-tyrosyl-[protein] + UTP = O-(5'-uridylyl)-L-tyrosyl-[protein] + diphosphate. Its function is as follows. Nucleotidyltransferase involved in the post-translational modification of proteins. It can catalyze the addition of adenosine monophosphate (AMP) or uridine monophosphate (UMP) to a protein, resulting in modifications known as AMPylation and UMPylation. The chain is Protein nucleotidyltransferase YdiU from Pseudomonas putida (strain ATCC 700007 / DSM 6899 / JCM 31910 / BCRC 17059 / LMG 24140 / F1).